Consider the following 110-residue polypeptide: uncharacterized protein (110 aa).

Disordered stretches follow at residues M1 to Q41 and L65 to S110. Residues E38–L68 adopt a coiled-coil conformation.

This is an uncharacterized protein from Mus musculus (Mouse).